Here is a 391-residue protein sequence, read N- to C-terminus: Cytochrome b (391 aa).

Helical transmembrane passes span 33–53 (FGSLLSLCLALQILTGLFLAM), 77–98 (WLIRSIHANGASFFFICIYLHI), 113–133 (WSAGVILLLLVMMTAFVGYVL), and 178–198 (FFAFHFLFPFGIIAMTLVHLL). Heme b is bound by residues His83 and His97. Residues His182 and His196 each contribute to the heme b site. His201 contributes to the a ubiquinone binding site. 4 helical membrane-spanning segments follow: residues 226–246 (YKDLIGFAWFALFLITLVLFI), 288–308 (LGGVFALLASILILLIVPILH), 320–340 (LAQIFMGLLVVDVAILTWIGG), and 347–367 (FIIIGQIASFLYFFLFLVFFP).

Belongs to the cytochrome b family. In terms of assembly, the cytochrome bc1 complex contains 3 respiratory subunits (MT-CYB, CYC1 and UQCRFS1), 2 core proteins (UQCRC1 and UQCRC2) and probably 6 low-molecular weight proteins. It depends on heme b as a cofactor.

It is found in the mitochondrion inner membrane. Component of the ubiquinol-cytochrome c reductase complex (complex III or cytochrome b-c1 complex) that is part of the mitochondrial respiratory chain. The b-c1 complex mediates electron transfer from ubiquinol to cytochrome c. Contributes to the generation of a proton gradient across the mitochondrial membrane that is then used for ATP synthesis. The polypeptide is Cytochrome b (mt-cyb) (Kryptolebias marmoratus (Mangrove killifish)).